The primary structure comprises 64 residues: Defensin beta 4A (64 aa).

A signal peptide spans 1-23 (MRVLYLLFSFLFIFLMPLPGVFG). Disulfide bonds link Cys31–Cys60, Cys38–Cys53, and Cys43–Cys61. The tract at residues 33-48 (KSGAICHPVFCPRRYK) is phosphatidylinositol 4,5-bisphosphate (PIP2) binding.

The protein belongs to the beta-defensin family. LAP/TAP subfamily. In terms of assembly, monomer. Homodimer. In terms of tissue distribution, expressed in lung epithelial cells (at protein level). Expressed in foreskin, lung and trachea. Lower expression in kidney, uterus and salivary gland tissue. Expressed in epithelial cells of the respiratory tract, with higher expression in distal parenchyma of the lung, trachea, and tonsils, and lower expression in pharynx and adenoid, and low expression in tongue and larynx.

It is found in the secreted. Its function is as follows. Exhibits antimicrobial activity against Gram-negative bacteria and Gram-positive bacteria, with highest activity against Gram-negative bacteria. Antimicrobial activity against P.aruginosa seems to be salt-sensitive and is reduced with high salt concentrations greater than 25 mM. Also exhibits antimicrobial activity against the yeast C.albicans. Permeabilizes C.albicans cell membranes via targeting plasma membrane lipid phosphatidylinositol 4,5-bisphosphate (PIP2), thereby leading to cell fragmentation and cell death. Acts as a ligand for C-C chemokine receptor CCR6. Binds to CCR6 and induces chemotactic activity of CCR6-expressing cells, such as immature dendritic cells and memory T cells. This is Defensin beta 4A (DEFB4A) from Homo sapiens (Human).